The primary structure comprises 857 residues: RNA-directed RNA polymerase 2a (857 aa).

The 114-residue stretch at 511–624 (KHCLEIDLSK…FSVLPPVGDP (114 aa)) folds into the RdRp catalytic domain. A disordered region spans residues 772-857 (TKQRKKKDGI…PCEHGGIIRI (86 aa)). Basic and acidic residues predominate over residues 800–812 (EKTETKVSHEEST).

This sequence belongs to the ssRNA positive-strand viruses RNA-directed RNA polymerase family. As to quaternary structure, interacts with replication protein 1a.

It catalyses the reaction RNA(n) + a ribonucleoside 5'-triphosphate = RNA(n+1) + diphosphate. RNA-dependent RNA polymerase which replicates the viral genome composed of 3 RNA segments, RNA1, RNA2 and RNA3. The protein is RNA-directed RNA polymerase 2a of Cucumis sativus (Cucumber).